The sequence spans 311 residues: GTP cyclohydrolase MptA (311 aa).

It belongs to the GTP cyclohydrolase IV family. Homodimer. Fe(2+) serves as cofactor.

It carries out the reaction GTP + H2O = 7,8-dihydroneopterin 2',3'-cyclic phosphate + formate + diphosphate + H(+). The protein operates within cofactor biosynthesis; 5,6,7,8-tetrahydromethanopterin biosynthesis. Converts GTP to 7,8-dihydro-D-neopterin 2',3'-cyclic phosphate, the first intermediate in the biosynthesis of coenzyme methanopterin. The protein is GTP cyclohydrolase MptA of Halobacterium salinarum (strain ATCC 29341 / DSM 671 / R1).